Consider the following 217-residue polypeptide: Thiopurine S-methyltransferase (217 aa).

4 residues coordinate S-adenosyl-L-methionine: tryptophan 11, leucine 46, glutamate 67, and arginine 122.

This sequence belongs to the class I-like SAM-binding methyltransferase superfamily. TPMT family.

It localises to the cytoplasm. The enzyme catalyses S-adenosyl-L-methionine + a thiopurine = S-adenosyl-L-homocysteine + a thiopurine S-methylether.. This is Thiopurine S-methyltransferase from Vibrio vulnificus (strain YJ016).